We begin with the raw amino-acid sequence, 638 residues long: Octopamine receptor 1 (638 aa).

Topologically, residues 1 to 28 (MSRDIFMKRLRLHLLFDEVAMVTHIVGD) are extracellular. A helical membrane pass occupies residues 29-53 (VLSSVLLCAVVLLVLVGNTLVVAAV). Residues 54–64 (ATSRKLRTVTN) lie on the Cytoplasmic side of the membrane. Residues 65–87 (VFIVNLACADLLLGVLVLPFSAV) traverse the membrane as a helical segment. The Extracellular portion of the chain corresponds to 88–102 (NEIKDVWIFGHVWCQ). Cys-101 and Cys-230 are joined by a disulfide. A helical membrane pass occupies residues 103-124 (VWLAVDVWLCTASILNLCCISL). The Cytoplasmic segment spans residues 125–147 (DRYLAITRPIRYPGLMSAKRAKT). A helical transmembrane segment spans residues 148–167 (LVAGVWLFSFVICCPPLIGW). Residues 168–239 (NDGGDGIMDY…CELTNSRGYR (72 aa)) are Extracellular-facing. N-linked (GlcNAc...) asparagine glycosylation is found at Asn-178, Asn-207, and Asn-215. Residues 240 to 259 (IYAALGSFFIPMLVMVFFYL) traverse the membrane as a helical segment. The Cytoplasmic segment spans residues 260–520 (QIYRAAVKTI…FNREKKAAKT (261 aa)). Residues 521-545 (LAIIVGAFIMCWMPFFTIYLVGAFC) form a helical membrane-spanning segment. Residues 546 to 551 (ENCISP) lie on the Extracellular side of the membrane. The chain crosses the membrane as a helical span at residues 552–575 (IVFSVAFWLGYCNSAMNPCVYALF). Topologically, residues 576–638 (SRDFRFAFRK…TASGGNGGYT (63 aa)) are cytoplasmic. Positions 618–638 (DDAKSSSDIGPTASGGNGGYT) are disordered.

It belongs to the G-protein coupled receptor 1 family. As to expression, expressed in the central nervous system.

Its subcellular location is the cell membrane. G-protein coupled receptor for octopamine (OA), which is a neurotransmitter, neurohormone, and neuromodulator in invertebrates. Activation of this receptor by octopamine induces an increase in both inositol phosphates and cyclic AMP. The coupling to adenylyl cyclase seems to be less efficient than the coupling to phospholipase C. The rank order of potency for agonists is p-synephrine &gt;= clonidine &gt; p-octopamine = xylometazoline = phenylephrine = oxymetazoline &gt; B-HT920 &gt; serotonin = p-tyramine &gt; epinephrine &gt; norepinephrine &gt; methoxamine = dopamine = histamine. For antagonists, the rank order is yohimbine &gt; chlopromazine / spiperone &gt; phentolamine &gt; mianserine &gt; rauwolscine &gt; prazosin &gt; alprenolol / propanolol &gt; pindolol. This is Octopamine receptor 1 from Lymnaea stagnalis (Great pond snail).